A 132-amino-acid chain; its full sequence is Ribosome-binding factor A (132 aa).

Belongs to the RbfA family. In terms of assembly, monomer. Binds 30S ribosomal subunits, but not 50S ribosomal subunits or 70S ribosomes.

The protein localises to the cytoplasm. One of several proteins that assist in the late maturation steps of the functional core of the 30S ribosomal subunit. Associates with free 30S ribosomal subunits (but not with 30S subunits that are part of 70S ribosomes or polysomes). Required for efficient processing of 16S rRNA. May interact with the 5'-terminal helix region of 16S rRNA. In Burkholderia multivorans (strain ATCC 17616 / 249), this protein is Ribosome-binding factor A.